The sequence spans 242 residues: Carbendazim hydrolyzing esterase (242 aa).

The active-site Acyl-ester intermediate is S77.

It belongs to the AB hydrolase superfamily.

Its subcellular location is the secreted. It catalyses the reaction carbendazim + H2O = 2-aminobenzimidazole + methanol + CO2. It carries out the reaction carbendazim + H2O = N-(1H-1,3-benzodiazol-2-yl)carbamate + methanol + H(+). The catalysed reaction is N-(1H-1,3-benzodiazol-2-yl)carbamate + H(+) = 2-aminobenzimidazole + CO2. In terms of biological role, catalyzes the hydrolysis of the fungicide carbendazim (methyl-1H-benzimidazol-2-ylcarbamate or MBC) to 2-aminobenzimidazole (2-AB). Following hydrolysis of the carbamate ester, the carbamate decarboxylates spontaneously. Can hydrolyze model carboxylesters such as methyl salicylate, alpha-naphthyl acetate and p-nitrophenyl acetate. In addition, shows substantial hydrolytic activity in vitro against widespread pollutants with carboxylester, carbamate and amide linkages, such as dimethyl phthalate, propanil and chlorpropham. The chain is Carbendazim hydrolyzing esterase from Nocardioides sp. (strain SG-4G).